The primary structure comprises 199 residues: NAD(P)H dehydrogenase (quinone) (199 aa).

One can recognise a Flavodoxin-like domain in the interval 4 to 190 (VLVLYYSAYG…AGARYQGKTI (187 aa)). FMN contacts are provided by residues 10–15 (SAYGHI) and 78–80 (TRF). Position 12 (Y12) interacts with NAD(+). Residue W98 coordinates substrate. Residues 113–119 (STATQHG) and H134 each bind FMN.

This sequence belongs to the WrbA family. The cofactor is FMN.

The catalysed reaction is a quinone + NADH + H(+) = a quinol + NAD(+). The enzyme catalyses a quinone + NADPH + H(+) = a quinol + NADP(+). The polypeptide is NAD(P)H dehydrogenase (quinone) (Rhodopseudomonas palustris (strain BisB5)).